A 508-amino-acid polypeptide reads, in one-letter code: Probable protein kinase UbiB (508 aa).

The region spanning 118–494 (DFDLKPVASA…QKRQNFLLLL (377 aa)) is the Protein kinase domain. ATP is bound by residues 124 to 132 (VASASVAQV) and lysine 151. Aspartate 286 functions as the Proton acceptor in the catalytic mechanism. Residues 488–508 (QNFLLLLIAILLAALLAKSLL) traverse the membrane as a helical segment.

Belongs to the ABC1 family. UbiB subfamily.

Its subcellular location is the cell inner membrane. It functions in the pathway cofactor biosynthesis; ubiquinone biosynthesis [regulation]. Its function is as follows. Is probably a protein kinase regulator of UbiI activity which is involved in aerobic coenzyme Q (ubiquinone) biosynthesis. In Chromobacterium violaceum (strain ATCC 12472 / DSM 30191 / JCM 1249 / CCUG 213 / NBRC 12614 / NCIMB 9131 / NCTC 9757 / MK), this protein is Probable protein kinase UbiB.